The primary structure comprises 293 residues: 4-hydroxy-tetrahydrodipicolinate synthase (293 aa).

Thr47 provides a ligand contact to pyruvate. Tyr136 acts as the Proton donor/acceptor in catalysis. The active-site Schiff-base intermediate with substrate is Lys164. Ile206 is a binding site for pyruvate.

This sequence belongs to the DapA family. Homotetramer; dimer of dimers.

Its subcellular location is the cytoplasm. It catalyses the reaction L-aspartate 4-semialdehyde + pyruvate = (2S,4S)-4-hydroxy-2,3,4,5-tetrahydrodipicolinate + H2O + H(+). It participates in amino-acid biosynthesis; L-lysine biosynthesis via DAP pathway; (S)-tetrahydrodipicolinate from L-aspartate: step 3/4. Its function is as follows. Catalyzes the condensation of (S)-aspartate-beta-semialdehyde [(S)-ASA] and pyruvate to 4-hydroxy-tetrahydrodipicolinate (HTPA). This chain is 4-hydroxy-tetrahydrodipicolinate synthase, found in Listeria innocua serovar 6a (strain ATCC BAA-680 / CLIP 11262).